Consider the following 598-residue polypeptide: UvrABC system protein C (598 aa).

A GIY-YIG domain is found at 11-91 (QKPGVYIMHN…IKKYRPHYNI (81 aa)). In terms of domain architecture, UVR spans 195–230 (KTTIKKLKKDMNRYAKNMEFEKAAMLRDQIDTIKIT).

This sequence belongs to the UvrC family. In terms of assembly, interacts with UvrB in an incision complex.

Its subcellular location is the cytoplasm. In terms of biological role, the UvrABC repair system catalyzes the recognition and processing of DNA lesions. UvrC both incises the 5' and 3' sides of the lesion. The N-terminal half is responsible for the 3' incision and the C-terminal half is responsible for the 5' incision. This is UvrABC system protein C from Methanosphaera stadtmanae (strain ATCC 43021 / DSM 3091 / JCM 11832 / MCB-3).